Here is a 257-residue protein sequence, read N- to C-terminus: RING1 and YY1-binding protein B (257 aa).

Disordered regions lie at residues 1–24 (MGDKKSPTRPKRQAKPTADNGFWD) and 45–257 (RKGT…DESF). Residues 19–48 (DNGFWDCSVCTFRNSAEAFKCSICDVRKGT) form a RanBP2-type zinc finger. The span at 74–129 (PKKEKKEKPERPEKDRAEEERPDINPPDEHPVEQRDKDKSEKEQPEKEKKDREKEI) shows a compositional bias: basic and acidic residues. Residues 149–168 (HQSPPSERNSIQSGKSTTKT) show a composition bias toward polar residues. Over residues 169–178 (KNSHNSRPKL) the composition is skewed to basic residues. A compositionally biased stretch (low complexity) spans 209 to 233 (TSSTSSSTVTSSASSEQQHQSSGSE).

It localises to the nucleus. Its subcellular location is the cytoplasm. May be implicated in the regulation of the transcription as a repressor of the transcriptional activity of E4TF1. This Danio rerio (Zebrafish) protein is RING1 and YY1-binding protein B (rybpb).